Here is a 277-residue protein sequence, read N- to C-terminus: ATP synthase subunit delta (277 aa).

The protein belongs to the ATPase delta chain family. F-type ATPases have 2 components, F(1) - the catalytic core - and F(0) - the membrane proton channel. F(1) has five subunits: alpha(3), beta(3), gamma(1), delta(1), epsilon(1). F(0) has three main subunits: a(1), b(2) and c(10-14). The alpha and beta chains form an alternating ring which encloses part of the gamma chain. F(1) is attached to F(0) by a central stalk formed by the gamma and epsilon chains, while a peripheral stalk is formed by the delta and b chains.

Its subcellular location is the cell membrane. Functionally, f(1)F(0) ATP synthase produces ATP from ADP in the presence of a proton or sodium gradient. F-type ATPases consist of two structural domains, F(1) containing the extramembraneous catalytic core and F(0) containing the membrane proton channel, linked together by a central stalk and a peripheral stalk. During catalysis, ATP synthesis in the catalytic domain of F(1) is coupled via a rotary mechanism of the central stalk subunits to proton translocation. This protein is part of the stalk that links CF(0) to CF(1). It either transmits conformational changes from CF(0) to CF(1) or is implicated in proton conduction. This chain is ATP synthase subunit delta, found in Frankia alni (strain DSM 45986 / CECT 9034 / ACN14a).